The primary structure comprises 264 residues: MICOS complex subunit MIC27 (264 aa).

The transit peptide at 1–27 (MAALRMGKLTTMPTGLIYASISVHVAK) directs the protein to the mitochondrion. The Mitochondrial intermembrane segment spans residues 28 to 110 (EEESKKQLVK…YVYLKNPPRD (83 aa)). The chain crosses the membrane as a helical span at residues 111–129 (FLPKIGVITVSGLAGFISA). The Mitochondrial matrix segment spans residues 130 to 137 (RKGSRFKR). The chain crosses the membrane as a helical span at residues 138-155 (IAYPLGLATLGATVCYPV). The Mitochondrial intermembrane segment spans residues 156–264 (QSVIIAKVAG…EDIDMYSTRS (109 aa)). The segment covering 189 to 198 (KLPEHKEKTK) has biased composition (basic and acidic residues). Residues 189–264 (KLPEHKEKTK…EDIDMYSTRS (76 aa)) form a disordered region. Positions 223–238 (AELSSETKTKSTSGAT) are enriched in low complexity. A compositionally biased stretch (basic and acidic residues) spans 245-256 (KLMDHGQSHPED).

It belongs to the apolipoprotein O/MICOS complex subunit Mic27 family. As to quaternary structure, component of the mitochondrial contact site and cristae organizing system (MICOS) complex, composed of at least MICOS10/MIC10, CHCHD3/MIC19, CHCHD6/MIC25, APOOL/MIC27, IMMT/MIC60, APOO/MIC23/MIC26 and QIL1/MIC13. This complex was also known under the names MINOS or MitOS complex. The MICOS complex associates with mitochondrial outer membrane proteins SAMM50, MTX1 and MTX2 (together described as components of the mitochondrial outer membrane sorting assembly machinery (SAM) complex) and DNAJC11, mitochondrial inner membrane protein TMEM11 and with HSPA9. The MICOS and SAM complexes together with DNAJC11 are part of a large protein complex spanning both membranes termed the mitochondrial intermembrane space bridging (MIB) complex. Interacts with MICOS10/MIC10, IMMT/MIC60 and APOO/MIC23/MIC26.

It localises to the mitochondrion inner membrane. The protein localises to the mitochondrion. Component of the MICOS complex, a large protein complex of the mitochondrial inner membrane that plays crucial roles in the maintenance of crista junctions, inner membrane architecture, and formation of contact sites to the outer membrane. Specifically binds to cardiolipin (in vitro) but not to the precursor lipid phosphatidylglycerol. Plays a crucial role in crista junction formation and mitochondrial function. The protein is MICOS complex subunit MIC27 (APOL) of Bos taurus (Bovine).